A 187-amino-acid polypeptide reads, in one-letter code: Core-binding factor subunit beta (187 aa).

Serine 10 carries the phosphoserine; by CK2 modification. A disordered region spans residues alanine 139–arginine 187. Positions glutamate 144–glutamine 170 are enriched in basic and acidic residues. Residue serine 159 is modified to Phosphoserine; by PKC.

This sequence belongs to the CBF-beta family. Heterodimer with RUNX1, RUNX2 and RUNX3. Interacts with COPRS. Found in a complex with PRMT5 and RUNX1. In terms of tissue distribution, expressed in all tissues tested. Highest level in thymus, but also abundantly expressed in muscle, lung and brain.

It localises to the nucleus. Functionally, forms the heterodimeric complex core-binding factor (CBF) with RUNX family proteins (RUNX1, RUNX2, and RUNX3). RUNX members modulate the transcription of their target genes through recognizing the core consensus binding sequence 5'-TGTGGT-3', or very rarely, 5'-TGCGGT-3', within their regulatory regions via their runt domain, while CBFB is a non-DNA-binding regulatory subunit that allosterically enhances the sequence-specific DNA-binding capacity of RUNX. The heterodimers bind to the core site of a number of enhancers and promoters, including murine leukemia virus, polyomavirus enhancer, T-cell receptor enhancers, LCK, IL3 and GM-CSF promoters. CBF complexes repress ZBTB7B transcription factor during cytotoxic (CD8+) T cell development. They bind to RUNX-binding sequence within the ZBTB7B locus acting as transcriptional silencer and allowing for cytotoxic T cell differentiation. This Mus musculus (Mouse) protein is Core-binding factor subunit beta (Cbfb).